Here is a 268-residue protein sequence, read N- to C-terminus: Satratoxin biosynthesis SC1 cluster protein 4 (268 aa).

Transmembrane regions (helical) follow at residues 34–54 (VWLVGIVQGCWGIAILLVHIF), 78–98 (LFAIYEALNSVLDFIVAGLAI), 113–133 (HLAGLFVLGAFSGFIGIIKIV), and 145–165 (AVIWNVVQMSISIICCCAPIY).

The protein belongs to the SAT4 family.

Its subcellular location is the membrane. The protein operates within mycotoxin biosynthesis. Its function is as follows. Part of the satratoxin SC1 cluster involved in the biosynthesis of satratoxins, trichothecene mycotoxins that are associated with human food poisonings. Satratoxins are suggested to be made by products of multiple gene clusters (SC1, SC2 and SC3) that encode 21 proteins in all, including polyketide synthases, acetyltransferases, and other enzymes expected to modify the trichothecene skeleton. SC1 encodes 10 proteins, SAT1 to SAT10. The largest are SAT8, which encodes a putative polyketide synthase (PKS) with a conventional non-reducing architecture, and SAT10, a putative protein containing four ankyrin repeats and thus may be involved in protein scaffolding. The putative short-chain reductase SAT3 may assist the PKS in some capacity. SAT6 contains a secretory lipase domain and acts probably as a trichothecene esterase. SAT5 encodes a putative acetyltransferase, and so, with SAT6, may affect endogenous protection from toxicity. The probable transcription factor SAT9 may regulate the expression of the SC1 cluster. SC2 encodes proteins SAT11 to SAT16, the largest of which encodes the putative reducing PKS SAT13. SAT11 is a cytochrome P450 monooxygenase, while SAT14 and SAT16 are probable acetyltransferases. The SC2 cluster may be regulated by the transcription factor SAT15. SC3 is a small cluster that encodes 5 proteins, SAT17 to SAT21. SAT21 is a putative MFS-type transporter which may have a role in exporting secondary metabolites. The four other proteins putatively encoded in SC3 include the taurine hydroxylase-like protein SAT17, the O-methyltransferase SAT18, the acetyltransferase SAT19, and the Cys6-type zinc finger SAT20, the latter being probably involved in regulation of SC3 expression. This chain is Satratoxin biosynthesis SC1 cluster protein 4, found in Stachybotrys chartarum (strain CBS 109288 / IBT 7711) (Toxic black mold).